Reading from the N-terminus, the 423-residue chain is Diaminobutyrate--2-oxoglutarate transaminase (423 aa).

Residue lysine 271 is modified to N6-(pyridoxal phosphate)lysine.

The protein belongs to the class-III pyridoxal-phosphate-dependent aminotransferase family. The cofactor is pyridoxal 5'-phosphate.

It carries out the reaction L-2,4-diaminobutanoate + 2-oxoglutarate = L-aspartate 4-semialdehyde + L-glutamate. It functions in the pathway amine and polyamine biosynthesis; ectoine biosynthesis; L-ectoine from L-aspartate 4-semialdehyde: step 1/3. In terms of biological role, catalyzes reversively the conversion of L-aspartate beta-semialdehyde (ASA) to L-2,4-diaminobutyrate (DABA) by transamination with L-glutamate. This is Diaminobutyrate--2-oxoglutarate transaminase (ectB) from Streptomyces coelicolor (strain ATCC BAA-471 / A3(2) / M145).